The chain runs to 272 residues: Putative pyruvate, phosphate dikinase regulatory protein (272 aa).

Residue G147–T154 coordinates ADP.

This sequence belongs to the pyruvate, phosphate/water dikinase regulatory protein family. PDRP subfamily.

It carries out the reaction N(tele)-phospho-L-histidyl/L-threonyl-[pyruvate, phosphate dikinase] + ADP = N(tele)-phospho-L-histidyl/O-phospho-L-threonyl-[pyruvate, phosphate dikinase] + AMP + H(+). The catalysed reaction is N(tele)-phospho-L-histidyl/O-phospho-L-threonyl-[pyruvate, phosphate dikinase] + phosphate + H(+) = N(tele)-phospho-L-histidyl/L-threonyl-[pyruvate, phosphate dikinase] + diphosphate. Its function is as follows. Bifunctional serine/threonine kinase and phosphorylase involved in the regulation of the pyruvate, phosphate dikinase (PPDK) by catalyzing its phosphorylation/dephosphorylation. The chain is Putative pyruvate, phosphate dikinase regulatory protein from Clostridium botulinum (strain Alaska E43 / Type E3).